The sequence spans 254 residues: Uracil-DNA glycosylase (254 aa).

Asp-91 functions as the Proton acceptor in the catalytic mechanism.

It belongs to the uracil-DNA glycosylase (UDG) superfamily. UNG family.

Its subcellular location is the host nucleus. It carries out the reaction Hydrolyzes single-stranded DNA or mismatched double-stranded DNA and polynucleotides, releasing free uracil.. Excises uracil residues from the DNA which can arise as a result of misincorporation of dUMP residues by DNA polymerase or deamination of cytosines. Therefore may reduce deleterious uracil incorporation into the viral genome, particularly in terminally differentiated cells which lack DNA repair enzymes. The chain is Uracil-DNA glycosylase (U81) from Homo sapiens (Human).